The primary structure comprises 908 residues: Protein translocase subunit SecA (908 aa).

Residues Q87, 105–109, and D512 contribute to the ATP site; that span reads GEGKT. The interval 860-908 is disordered; it reads AESLVGSSDEHEAVTAQAPMIRDGEKVGRNDPCPCGSGRKYKQCHGKLS. Zn(2+) contacts are provided by C892, C894, C903, and H904. The span at 898–908 shows a compositional bias: basic residues; the sequence is RKYKQCHGKLS.

Belongs to the SecA family. In terms of assembly, monomer and homodimer. Part of the essential Sec protein translocation apparatus which comprises SecA, SecYEG and auxiliary proteins SecDF-YajC and YidC. Zn(2+) is required as a cofactor.

The protein localises to the cell inner membrane. It localises to the cytoplasm. The enzyme catalyses ATP + H2O + cellular proteinSide 1 = ADP + phosphate + cellular proteinSide 2.. In terms of biological role, part of the Sec protein translocase complex. Interacts with the SecYEG preprotein conducting channel. Has a central role in coupling the hydrolysis of ATP to the transfer of proteins into and across the cell membrane, serving both as a receptor for the preprotein-SecB complex and as an ATP-driven molecular motor driving the stepwise translocation of polypeptide chains across the membrane. The chain is Protein translocase subunit SecA from Shewanella baltica (strain OS155 / ATCC BAA-1091).